A 497-amino-acid polypeptide reads, in one-letter code: Probable cytosol aminopeptidase (497 aa).

2 residues coordinate Mn(2+): Lys265 and Asp270. Lys277 is a catalytic residue. The Mn(2+) site is built by Asp288, Asp347, and Glu349. Residue Arg351 is part of the active site.

Belongs to the peptidase M17 family. Mn(2+) serves as cofactor.

The protein localises to the cytoplasm. It catalyses the reaction Release of an N-terminal amino acid, Xaa-|-Yaa-, in which Xaa is preferably Leu, but may be other amino acids including Pro although not Arg or Lys, and Yaa may be Pro. Amino acid amides and methyl esters are also readily hydrolyzed, but rates on arylamides are exceedingly low.. The catalysed reaction is Release of an N-terminal amino acid, preferentially leucine, but not glutamic or aspartic acids.. In terms of biological role, presumably involved in the processing and regular turnover of intracellular proteins. Catalyzes the removal of unsubstituted N-terminal amino acids from various peptides. This Geobacillus thermodenitrificans (strain NG80-2) protein is Probable cytosol aminopeptidase.